The sequence spans 62 residues: Large ribosomal subunit protein uL30 (62 aa).

Belongs to the universal ribosomal protein uL30 family. As to quaternary structure, part of the 50S ribosomal subunit.

The polypeptide is Large ribosomal subunit protein uL30 (Dinoroseobacter shibae (strain DSM 16493 / NCIMB 14021 / DFL 12)).